The chain runs to 477 residues: MILSRRMIGSLAMTWLPFADAASETLPLRQLLRLSLFQVSVGMAQVLLLGTLNRVMILELGVPALVVAAMISIPVLVAPFRAILGHRSDTYRSALGWKRVPYLWFGSLWQMGGLALMPFSLILLSGDQTMGPAWAGEAFAGVAFLMAGVGMHMTQTAGLALAADRATEETRPQVVALLYVMFLIGMGISAVIVGWLLRDFDQITLIRVVQGCGAMTLVLNVIALWKQEVMRPMTKAEREAPRQSFREAWGLLAAETGALRLLATVMVGTLAFSMQDVLLEPYGGQVLGLKVGQTTWLTAGWAFGALVGFIWSARRLSQGAVAHRVAARGLLVGIVAFTAVLFSPLFGSKVLFFASAMGIGLGSGMFGIATLTVAMMVVVRGASGIALGAWGAAQATAAGLAVFIGGATRDLVAHAAAAGYLGSLHSPALGYTVVYVTEIGLLFITLAVLGPLVRPGSLFPKKPEAGEARIGLAEFPT.

Transmembrane regions (helical) follow at residues 31-51, 60-80, 103-123, 130-150, 177-197, 205-225, 248-268, 291-311, 334-354, 359-379, 384-404, and 433-453; these read LLRLSLFQVSVGMAQVLLLGT, LGVPALVVAAMISIPVLVAPF, LWFGSLWQMGGLALMPFSLIL, MGPAWAGEAFAGVAFLMAGVG, LLYVMFLIGMGISAVIVGWLL, LIRVVQGCGAMTLVLNVIALW, AWGLLAAETGALRLLATVMVG, VGQTTWLTAGWAFGALVGFIW, IVAFTAVLFSPLFGSKVLFFA, IGLGSGMFGIATLTVAMMVVV, GIALGAWGAAQATAAGLAVFI, and VVYVTEIGLLFITLAVLGPLV.

This sequence belongs to the PucC family.

The protein localises to the cell membrane. This is an uncharacterized protein from Rhodobacter capsulatus (Rhodopseudomonas capsulata).